The primary structure comprises 505 residues: Maturase K (505 aa).

The protein belongs to the intron maturase 2 family. MatK subfamily.

The protein localises to the plastid. The protein resides in the chloroplast. Its function is as follows. Usually encoded in the trnK tRNA gene intron. Probably assists in splicing its own and other chloroplast group II introns. The chain is Maturase K from Nuphar advena (Common spatterdock).